We begin with the raw amino-acid sequence, 426 residues long: UDP-N-acetylglucosamine 1-carboxyvinyltransferase 2 (426 aa).

22 to 23 provides a ligand contact to phosphoenolpyruvate; the sequence is KN. UDP-N-acetyl-alpha-D-glucosamine is bound at residue Arg92. Residue Asp116 is the Proton donor of the active site. Residues 121–125, Asp307, and Ile329 each bind UDP-N-acetyl-alpha-D-glucosamine; that span reads RPIDQ.

Belongs to the EPSP synthase family. MurA subfamily.

Its subcellular location is the cytoplasm. The enzyme catalyses phosphoenolpyruvate + UDP-N-acetyl-alpha-D-glucosamine = UDP-N-acetyl-3-O-(1-carboxyvinyl)-alpha-D-glucosamine + phosphate. It functions in the pathway cell wall biogenesis; peptidoglycan biosynthesis. In terms of biological role, cell wall formation. Adds enolpyruvyl to UDP-N-acetylglucosamine. This chain is UDP-N-acetylglucosamine 1-carboxyvinyltransferase 2, found in Lactiplantibacillus plantarum (strain ATCC BAA-793 / NCIMB 8826 / WCFS1) (Lactobacillus plantarum).